A 98-amino-acid chain; its full sequence is HssA/B-like protein 50 (98 aa).

2 disordered regions span residues M1–S26 and T68–I98. Gly residues predominate over residues G84 to I98.

This sequence belongs to the hssA/B family.

The chain is HssA/B-like protein 50 (hssl50) from Dictyostelium discoideum (Social amoeba).